A 289-amino-acid chain; its full sequence is Oxaloacetate decarboxylase 1 (289 aa).

Ser-50 is a substrate binding site. Asp-88 serves as a coordination point for Mg(2+). Residues Arg-159 and His-235 each contribute to the substrate site.

Belongs to the isocitrate lyase/PEP mutase superfamily. Oxaloacetate decarboxylase family. Homotetramer; dimer of dimers. Mg(2+) is required as a cofactor.

The enzyme catalyses oxaloacetate + H(+) = pyruvate + CO2. In terms of biological role, catalyzes the decarboxylation of oxaloacetate into pyruvate. Seems to play a role in maintaining cellular concentrations of bicarbonate and pyruvate. This is Oxaloacetate decarboxylase 1 from Pseudomonas fluorescens (strain Pf0-1).